Here is a 380-residue protein sequence, read N- to C-terminus: Cytochrome b (380 aa).

Transmembrane regions (helical) follow at residues 34–54 (FGSLLGICLLTQILTGLLLAT), 78–99 (WLIRNLHANGASFFFICIYLHI), 114–134 (WNTGIILLLALMATAFVGYVL), and 179–199 (FFALHFLLPFMIAGLAFIHLT). Positions 84 and 98 each coordinate heme b. H183 and H197 together coordinate heme b. Residue H202 participates in a ubiquinone binding. The next 4 helical transmembrane spans lie at 227-247 (LKDILGFIVMFLPLTTLALFS), 289-309 (LGGVLALAASVLVLFLTPLLH), 321-341 (FSQFLFWTLVANLFILTWVGS), and 348-368 (FIIIGQLASLTYFTILLLLFP).

It belongs to the cytochrome b family. In terms of assembly, the cytochrome bc1 complex contains 11 subunits: 3 respiratory subunits (MT-CYB, CYC1 and UQCRFS1), 2 core proteins (UQCRC1 and UQCRC2) and 6 low-molecular weight proteins (UQCRH/QCR6, UQCRB/QCR7, UQCRQ/QCR8, UQCR10/QCR9, UQCR11/QCR10 and a cleavage product of UQCRFS1). This cytochrome bc1 complex then forms a dimer. Heme b is required as a cofactor.

Its subcellular location is the mitochondrion inner membrane. Component of the ubiquinol-cytochrome c reductase complex (complex III or cytochrome b-c1 complex) that is part of the mitochondrial respiratory chain. The b-c1 complex mediates electron transfer from ubiquinol to cytochrome c. Contributes to the generation of a proton gradient across the mitochondrial membrane that is then used for ATP synthesis. The protein is Cytochrome b (MT-CYB) of Alle alle (Dovekie).